The sequence spans 189 residues: ATP synthase subunit delta (189 aa).

This sequence belongs to the ATPase delta chain family. F-type ATPases have 2 components, F(1) - the catalytic core - and F(0) - the membrane proton channel. F(1) has five subunits: alpha(3), beta(3), gamma(1), delta(1), epsilon(1). F(0) has three main subunits: a(1), b(2) and c(10-14). The alpha and beta chains form an alternating ring which encloses part of the gamma chain. F(1) is attached to F(0) by a central stalk formed by the gamma and epsilon chains, while a peripheral stalk is formed by the delta and b chains.

Its subcellular location is the cell inner membrane. F(1)F(0) ATP synthase produces ATP from ADP in the presence of a proton or sodium gradient. F-type ATPases consist of two structural domains, F(1) containing the extramembraneous catalytic core and F(0) containing the membrane proton channel, linked together by a central stalk and a peripheral stalk. During catalysis, ATP synthesis in the catalytic domain of F(1) is coupled via a rotary mechanism of the central stalk subunits to proton translocation. In terms of biological role, this protein is part of the stalk that links CF(0) to CF(1). It either transmits conformational changes from CF(0) to CF(1) or is implicated in proton conduction. In Methylorubrum extorquens (strain PA1) (Methylobacterium extorquens), this protein is ATP synthase subunit delta.